Reading from the N-terminus, the 924-residue chain is Periplasmic nitrate reductase (924 aa).

Residues 1–30 (MNRRDFIKNTAIASAASVAGLSVPSSMLGA) constitute a signal peptide (tat-type signal). The 4Fe-4S Mo/W bis-MGD-type domain occupies 35–91 (WKWDKAVCRFCGTGCGIMIARKDGKIVATKGDPAAPVNRGLNCIKGYFNAKIMYGED). Cys42, Cys45, Cys49, and Cys77 together coordinate [4Fe-4S] cluster. Residues Lys79, Gln147, Asn172, Cys176, 209–216 (WGANMAEM), Met417, Gln421, Asn527, 552–553 (SD), Lys575, Asp602, and 814–823 (TGRVLEHWHS) contribute to the Mo-bis(molybdopterin guanine dinucleotide) site. Trp890 contributes to the substrate binding site. Mo-bis(molybdopterin guanine dinucleotide) contacts are provided by Asn898 and Lys915.

This sequence belongs to the prokaryotic molybdopterin-containing oxidoreductase family. NasA/NapA/NarB subfamily. In terms of assembly, component of the periplasmic nitrate reductase NapAB complex composed of NapA and NapB. It depends on [4Fe-4S] cluster as a cofactor. The cofactor is Mo-bis(molybdopterin guanine dinucleotide). In terms of processing, predicted to be exported by the Tat system. The position of the signal peptide cleavage has not been experimentally proven.

It is found in the periplasm. The enzyme catalyses 2 Fe(II)-[cytochrome] + nitrate + 2 H(+) = 2 Fe(III)-[cytochrome] + nitrite + H2O. Its function is as follows. Catalytic subunit of the periplasmic nitrate reductase complex NapAB. Receives electrons from NapB and catalyzes the reduction of nitrate to nitrite. In Campylobacter jejuni subsp. jejuni serotype O:6 (strain 81116 / NCTC 11828), this protein is Periplasmic nitrate reductase.